A 175-amino-acid chain; its full sequence is Bcl-2-related protein A1 (175 aa).

The short motif at 77–97 (KEFEDGIINWGRIVTIFAFEG) is the BH1 element. Residues 132–147 (EWIRQNGGWENGFVKK) carry the BH2 motif.

This sequence belongs to the Bcl-2 family. Interacts directly with BAK1, BID, BMF and BBC3. Interacts directly with BCL2L11/BIM. Interacts with BAX isoform Sigma. Interacts directly with PMAIP1. Interacts with RTL10/BOP. Interacts with ING4. Interacts with UBQLN4. In terms of tissue distribution, seems to be restricted to the hematopoietic compartment. Expressed in peripheral blood, spleen, and bone marrow, at moderate levels in lung, small intestine and testis, at a minimal levels in other tissues. Also found in vascular smooth muscle cells and hematopoietic malignancies.

It localises to the cytoplasm. Its function is as follows. Retards apoptosis induced by IL-3 deprivation. May function in the response of hemopoietic cells to external signals and in maintaining endothelial survival during infection. Can inhibit apoptosis induced by serum starvation in the mammary epithelial cell line HC11. The polypeptide is Bcl-2-related protein A1 (BCL2A1) (Homo sapiens (Human)).